The following is a 2362-amino-acid chain: Filaggrin-2 (2362 aa).

The S-100-like stretch occupies residues 1–81 (MAYLLRSVVT…TEFILMIFKL (81 aa)). 2 consecutive EF-hand domains span residues 8 to 43 (VVTI…EFRP) and 49 to 84 (DDPD…LALA). Positions 62, 64, 66, 68, and 73 each coordinate Ca(2+). Disordered stretches follow at residues 96–238 (ASGS…GLSC) and 284–2109 (GCCR…SSIP). Residues 111-120 (EESETEEEEE) are compositionally biased toward acidic residues. Basic and acidic residues-rich tracts occupy residues 159–174 (KRLE…EESR) and 189–214 (NKEK…PSRE). Filaggrin repeat units follow at residues 261-308 (GYNT…NQSC) and 373-414 (HSSC…SNGF). Polar residues-rich tracts occupy residues 284 to 317 (GCCR…CQSG), 342 to 375 (SCSQ…SHSS), and 383 to 395 (GATQ…QQRM). Residues 396–411 (SSCGHSSSSHQKGCSS) show a composition bias toward low complexity. 2 stretches are compositionally biased toward polar residues: residues 421-443 (ASGS…SSGF) and 450-469 (SGQS…SGYS). 3 stretches are compositionally biased toward low complexity: residues 474-519 (GSGQ…QSSG), 539-550 (GSRQSSGSEQHG), and 567-580 (SQSS…SGSQ). One copy of the Filaggrin 3 repeat lies at 555 to 607 (QSSGSGKHETGPSQSSSSGHHGSGSQQHGGGSGQSTGFGEHESSSGHSSSSGQ). Residues 581-590 (QHGGGSGQST) show a composition bias toward gly residues. Residues 599–618 (SGHSSSSGQHRSGSRHSSGS) are compositionally biased toward low complexity. Over residues 632-653 (GHHGSGSQQHGGGSGNSTGFGE) the composition is skewed to gly residues. Low complexity predominate over residues 654 to 675 (HGSSSHPLPSSGQNESSSGQSS). Residues 672 to 723 (GQSSRSERHGTGSGQSSGFGQHGSGSHQSSSSGHNEYGSGQTSSSWPHGKGS) form a Filaggrin 4 repeat. The span at 682–694 (TGSGQSSGFGQHG) shows a compositional bias: gly residues. Composition is skewed to low complexity over residues 695–705 (SGSHQSSSSGH), 728–754 (GYGE…QSSS), and 780–798 (GYGE…WQHG). The segment covering 826 to 838 (TGSGQSLGFGQHG) has biased composition (gly residues). The span at 846–864 (SSGHYESVSEPSSSSWQHG) shows a compositional bias: low complexity. The Filaggrin 5 repeat unit spans residues 880–927 (HGQSSSAWNHGNESGQSNGYGEHESGHGQSSSAWNHGNESGQSNGFGE). Composition is skewed to polar residues over residues 886-896 (AWNHGNESGQS) and 912-925 (AWNH…SNGF). Residues 973-982 (ESSEGEEHSV) show a composition bias toward basic and acidic residues. The Filaggrin 6 repeat unit spans residues 984-1035 (PRRYSGYGHGQGQAGHQQRESGYGQRGRPQGPSQDSSRQPQAGHGQPSQSGY). The segment covering 1014 to 1035 (GPSQDSSRQPQAGHGQPSQSGY) has biased composition (polar residues). Basic and acidic residues predominate over residues 1047–1059 (EYSEGEAHSEVSQ). A compositionally biased stretch (basic residues) spans 1067 to 1077 (CHCHCHGQARH). Residues 1104-1121 (GPGQPSQSGSRRSPRSQP) show a composition bias toward low complexity. Gly residues predominate over residues 1142-1152 (SGHGHGQGQGQ). Residues 1162 to 1174 (HGQQGRPQGPSQD) show a composition bias toward polar residues. The stretch at 1165–1210 (QGRPQGPSQDSSRQPQAGQGQPSQSGSGRSPRRSPVHPESSEGEEH) is one Filaggrin 7 repeat. The segment covering 1175–1193 (SSRQPQAGQGQPSQSGSGR) has biased composition (low complexity). A phosphoserine mark is found at Ser-1198, Ser-1204, and Ser-1205. Residues 1220-1232 (SGHGHGQGQGQGQ) are compositionally biased toward gly residues. Over residues 1255–1273 (SSRQPQAGQGQPSQSGSGR) the composition is skewed to low complexity. Residues Ser-1278, Ser-1284, and Ser-1285 each carry the phosphoserine modification. The Filaggrin 8 repeat unit spans residues 1280–1334 (VHPESSEGEEHSVVPQRHSGSGHGHGQGQGQAGHQQRESVHGQPVRPEVPTQDSS). Gly residues predominate over residues 1300 to 1310 (SGHGHGQGQGQ). Positions 1333–1351 (SSRQPQAGQGQPSQSGSGR) are enriched in low complexity. 3 positions are modified to phosphoserine: Ser-1356, Ser-1362, and Ser-1363. Over residues 1377-1396 (ESCHCHCHDQAGHQQRESVH) the composition is skewed to basic and acidic residues. The segment covering 1413-1436 (PQAGPGQPSQSGSRRSPRSSPVHP) has biased composition (low complexity). Phosphoserine occurs at positions 1438 and 1439. Positions 1454–1464 (SGHGHGQGQGQ) are enriched in gly residues. A Filaggrin 9 repeat occupies 1474-1522 (HGQRGRPQGPTQDSSRQPQAGQGQPSQSGSGRSPRRSPVHPESSEGEEH). Residues 1487–1505 (SSRQPQAGQGQPSQSGSGR) show a composition bias toward low complexity. Phosphoserine occurs at positions 1510, 1516, and 1517. A compositionally biased stretch (gly residues) spans 1532–1544 (SGHGHGHGQGQGQ). Over residues 1567-1585 (SSRQPQAGQGQPSQSGSGR) the composition is skewed to low complexity. A phosphoserine mark is found at Ser-1590, Ser-1596, and Ser-1597. Low complexity-rich tracts occupy residues 1643–1661 (SSRQ…GSGR) and 1683–1696 (QRHS…GQGQ). Residues 1698-1708 (HAEHQQRESVH) show a composition bias toward basic and acidic residues. The stretch at 1723 to 1756 (RQPQAGQGQPSLSGSGRSPRRSPVHPESSEGEEH) is one Filaggrin 10 repeat. The segment covering 1724 to 1739 (QPQAGQGQPSLSGSGR) has biased composition (low complexity). Phosphoserine is present on residues Ser-1744, Ser-1750, Ser-1751, Ser-1824, Ser-1830, and Ser-1831. A compositionally biased stretch (low complexity) spans 1801-1825 (SSRQPQAGQGQPSQSGSGRSPGRSP). Residues 1829 to 1848 (ESSEGEEHSVVPQRHSESGH) are compositionally biased toward basic and acidic residues. Low complexity predominate over residues 1879-1897 (SSRQPQAGQGQPSQSGSGR). Residues Ser-1902, Ser-1908, and Ser-1909 each carry the phosphoserine modification. The segment covering 1924-1934 (SGHGHGQGQGQ) has biased composition (gly residues). Low complexity predominate over residues 1949–1975 (RPQGPSQDSSSQPQASQGQPSQSGSGR). 3 positions are modified to phosphoserine: Ser-1980, Ser-1986, and Ser-1987. Gly residues predominate over residues 2002-2012 (SGHGHGQGQGQ). One copy of the Filaggrin 11 repeat lies at 2016 to 2070 (QQRESLHGQRGRSQSPFHPSHSIHWQSKCTISKKSSRLSGHYGRNHFQSTISGNQ). Composition is skewed to polar residues over residues 2026-2048 (GRSQ…TISK), 2061-2079 (HFQS…SSRH), and 2100-2109 (LRSNSQSSIP). Ser-2104 bears the Phosphoserine mark. Residues 2218-2259 (DDSQYILFQKHLESPSFGNQSGFSPNERQLYTCNESIDSYHL) form a Filaggrin 12 repeat.

The protein belongs to the S100-fused protein family. It in the N-terminal section; belongs to the S-100 family. In terms of processing, deiminated by PADI1, PADI2 or PADI3 in vitro. The deiminated form is degraded by calpain-1/CAPN1 more quickly and into shorter peptides than the intact protein. May be processed by calpain-1/CAPN1.

The protein localises to the cytoplasm. It is found in the cytoplasmic granule. Essential for normal cell-cell adhesion in the cornified cell layers. Important for proper integrity and mechanical strength of the stratum corneum of the epidermis. The chain is Filaggrin-2 (Flg2) from Mus musculus (Mouse).